Here is a 493-residue protein sequence, read N- to C-terminus: Glycerol kinase (493 aa).

Position 13 (T13) interacts with ADP. ATP-binding residues include T13, T14, and S15. T13 contributes to the sn-glycerol 3-phosphate binding site. ADP is bound at residue R17. Sn-glycerol 3-phosphate-binding residues include R83, E84, Y135, and D244. Positions 83, 84, 135, 244, and 245 each coordinate glycerol. Residues T266 and G309 each contribute to the ADP site. ATP is bound by residues T266, G309, Q313, and G410. Residues G410 and N414 each contribute to the ADP site.

It belongs to the FGGY kinase family.

It catalyses the reaction glycerol + ATP = sn-glycerol 3-phosphate + ADP + H(+). It functions in the pathway polyol metabolism; glycerol degradation via glycerol kinase pathway; sn-glycerol 3-phosphate from glycerol: step 1/1. Inhibited by fructose 1,6-bisphosphate (FBP). Functionally, key enzyme in the regulation of glycerol uptake and metabolism. Catalyzes the phosphorylation of glycerol to yield sn-glycerol 3-phosphate. In Shewanella pealeana (strain ATCC 700345 / ANG-SQ1), this protein is Glycerol kinase.